Here is a 222-residue protein sequence, read N- to C-terminus: CMKAAPMKEVSVRGQGSLVYPGLRTQGNLETLSGPNDATRGLTSLADTFEHVIEELLDEQQVIQPSKENKDADLYSSRVMLSSQVPLEPPLLFLLEEYKNYLDAANMSMRVRRHSDPARRGELSVCDSTSEWVTAAEKKTAVDMSGATVTVLEKVPVPKGQLKQYFYETKCSSKGYAKEGCRGIDKRYWNSQCRTTQSYVRALTMDNKKRVGWRFIRIDTSC.

The first 4 residues, 1-4, serve as a signal peptide directing secretion; it reads CMKA. Residues 5 to 113 constitute a propeptide that is removed on maturation; that stretch reads APMKEVSVRG…AANMSMRVRR (109 aa). A glycan (N-linked (GlcNAc...) asparagine) is linked at N106. 2 disulfides stabilise this stretch: C126–C193 and C171–C222.

Belongs to the NGF-beta family.

It localises to the secreted. In terms of biological role, promotes the survival of neuronal populations that are all located either in the central nervous system or directly connected to it. In Xenopeltis unicolor (Sunbeam snake), this protein is Neurotrophic factor BDNF precursor form (BDNF).